The sequence spans 314 residues: Acetyl-coenzyme A carboxylase carboxyl transferase subunit beta (314 aa).

A CoA carboxyltransferase N-terminal domain is found at 25–294 (VWTKCDSCSQ…PGTKPIVAEF (270 aa)). Zn(2+) contacts are provided by Cys-29, Cys-32, Cys-48, and Cys-51. The segment at 29 to 51 (CDSCSQVLYRAELERNLEVCPKC) adopts a C4-type zinc-finger fold.

It belongs to the AccD/PCCB family. Acetyl-CoA carboxylase is a heterohexamer composed of biotin carboxyl carrier protein (AccB), biotin carboxylase (AccC) and two subunits each of ACCase subunit alpha (AccA) and ACCase subunit beta (AccD). The cofactor is Zn(2+).

It localises to the cytoplasm. The enzyme catalyses N(6)-carboxybiotinyl-L-lysyl-[protein] + acetyl-CoA = N(6)-biotinyl-L-lysyl-[protein] + malonyl-CoA. Its pathway is lipid metabolism; malonyl-CoA biosynthesis; malonyl-CoA from acetyl-CoA: step 1/1. Component of the acetyl coenzyme A carboxylase (ACC) complex. Biotin carboxylase (BC) catalyzes the carboxylation of biotin on its carrier protein (BCCP) and then the CO(2) group is transferred by the transcarboxylase to acetyl-CoA to form malonyl-CoA. This chain is Acetyl-coenzyme A carboxylase carboxyl transferase subunit beta, found in Photorhabdus laumondii subsp. laumondii (strain DSM 15139 / CIP 105565 / TT01) (Photorhabdus luminescens subsp. laumondii).